The sequence spans 776 residues: Transcriptional regulator QRICH1 (776 aa).

Met1 is modified (N-acetylmethionine). A CARD domain is found at 6-48 (ENTISFEEYIRVKARSVPQHRMKEFLDSLASKGPEALQEFQQT). 2 disordered regions span residues 139–164 (IQGQ…PSQL) and 218–240 (ALSP…GTAS). Residue Ser345 is modified to Phosphoserine. Residues Lys353 and Lys358 each participate in a glycyl lysine isopeptide (Lys-Gly) (interchain with G-Cter in SUMO2) cross-link. Over residues 419-429 (QQQPQQQTPQE) the composition is skewed to low complexity. Residues 419 to 441 (QQQPQQQTPQEQTPPPQQQQQQL) form a disordered region. Ser464 is modified (phosphoserine).

It is found in the nucleus. The protein localises to the cytoplasm. It localises to the cell membrane. Its function is as follows. Transcriptional regulator that acts as a mediator of the integrated stress response (ISR) through transcriptional control of protein homeostasis under conditions of ER stress. Controls the outcome of the unfolded protein response (UPR) which is an ER-stress response pathway. ER stress induces QRICH1 translation by a ribosome translation re-initiation mechanism in response to EIF2S1/eIF-2-alpha phosphorylation, and stress-induced QRICH1 regulates a transcriptional program associated with protein translation, protein secretion-mediated proteotoxicity and cell death during the terminal UPR. May cooperate with ATF4 transcription factor signaling to regulate ER homeostasis which is critical for cell viability. Up-regulates CASP3/caspase-3 activity in epithelial cells under ER stress. Central regulator of proteotoxicity associated with ER stress-mediated inflammatory diseases in the intestines and liver. Involved in chondrocyte hypertrophy, a process required for normal longitudinal bone growth. This is Transcriptional regulator QRICH1 from Homo sapiens (Human).